A 160-amino-acid chain; its full sequence is 3-hydroxyacyl-[acyl-carrier-protein] dehydratase FabZ (160 aa).

The active site involves histidine 59.

This sequence belongs to the thioester dehydratase family. FabZ subfamily.

The protein localises to the cytoplasm. The enzyme catalyses a (3R)-hydroxyacyl-[ACP] = a (2E)-enoyl-[ACP] + H2O. Involved in unsaturated fatty acids biosynthesis. Catalyzes the dehydration of short chain beta-hydroxyacyl-ACPs and long chain saturated and unsaturated beta-hydroxyacyl-ACPs. The sequence is that of 3-hydroxyacyl-[acyl-carrier-protein] dehydratase FabZ from Burkholderia thailandensis (strain ATCC 700388 / DSM 13276 / CCUG 48851 / CIP 106301 / E264).